We begin with the raw amino-acid sequence, 4146 residues long: DNA-dependent protein kinase catalytic subunit (4146 aa).

HEAT repeat units follow at residues 308-343 (DDYQSLFEVISKWCGHTNGEMKKLAFAALDSFLKQI), 925-962 (VIYLDMFLPHITELALSTSDRQTKVAACELLHSIVAFM), 1026-1062 (QDTVALLEAILTGIVDPVDSTLRDFCGQCIQEFLRWS), and 1075-1111 (PVNTTSLFKRLYSLALHPNAFKRLGAALAFNNIYRDF). TPR repeat units follow at residues 1745 to 1778 (PMKSDEFPKGTLKFNNYVDCIKKFLDALELSQSP) and 1974 to 2007 (VFSELKFYQGFLFTEKKEKNLLIFENLIDLQRNY). Serine 2075 is subject to Phosphoserine; by autocatalysis. Position 2631 is a phosphothreonine; by autocatalysis (threonine 2631). A Phosphoserine; by autocatalysis modification is found at serine 2634. 2 positions are modified to phosphothreonine; by autocatalysis: threonine 2659 and threonine 2668. Residues 2873–3556 (FIACVQDMCY…VYPFMVSGES (684 aa)) enclose the FAT domain. The region spanning 3739–4071 (FDERVSVMAS…IHCAKRKLDG (333 aa)) is the PI3K/PI4K catalytic domain. Positions 3745-3751 (VMASIRK) are G-loop. Positions 3937–3945 (GIGDRHLSN) are catalytic loop. An activation loop region spans residues 3957 to 3982 (GIDFGHAFGTATQFLPVPELMPFRLT). The FATC domain occupies 4114–4146 (DGLTEETQVQCLIDQATDPNILGRVWKGWEPWI).

Belongs to the PI3/PI4-kinase family. As to quaternary structure, DNA-PK is a heterotrimer of prkdc and the Ku dimer (composed of xrcc6/Ku70 and xrcc5/Ku86). Component of the core long-range non-homologous end joining (NHEJ) complex (also named DNA-PK complex) composed of prkdc, lig4, xrcc4, xrcc6/ku70, xrcc5/ku86 and nhej1/xlf. Additional component of the NHEJ complex includes paxx. Following autophosphorylation, prkdc dissociates from DNA. In terms of processing, autophosphorylated at two clusters, the T2609 cluster and the S2056 cluster. Autophosphorylated on Ser-2075, Thr-2631, Thr-2659 and Thr-2668. Ser-2075 and Thr-2668 are DNA damage-inducible phosphorylation sites (inducible with ionizing radiation, IR) dephosphorylated by PPP5C. Autophosphorylation induces a conformational change that leads to remodeling of the DNA-PK complex, requisite for efficient end processing and DNA repair. Autophosphorylation in trans within DNA-PK complexes loaded on DNA ends leads to the dissociation of PRKDC from DNA and the transition into the short-range NHEJ complex. Autophosphorylation of the T2609 cluster is required for hematopoietic development and protein synthesis in erythrocytes precursors.

It is found in the nucleus. The protein resides in the nucleolus. It carries out the reaction L-seryl-[protein] + ATP = O-phospho-L-seryl-[protein] + ADP + H(+). The catalysed reaction is L-threonyl-[protein] + ATP = O-phospho-L-threonyl-[protein] + ADP + H(+). Functionally, serine/threonine-protein kinase that acts as a molecular sensor for DNA damage. Involved in DNA nonhomologous end joining (NHEJ) required for double-strand break (DSB) repair and V(D)J recombination. Must be bound to DNA to express its catalytic properties. Promotes processing of hairpin DNA structures in V(D)J recombination by activation of the hairpin endonuclease artemis (DCLRE1C). Recruited by XRCC5 and XRCC6 to DNA ends and is required to (1) protect and align broken ends of DNA, thereby preventing their degradation, (2) and sequester the DSB for repair by NHEJ. Acts as a scaffold protein to aid the localization of DNA repair proteins to the site of damage. The assembly of the DNA-PK complex at DNA ends is also required for the NHEJ ligation step. Found at the ends of chromosomes, suggesting a further role in the maintenance of telomeric stability and the prevention of chromosomal end fusion. As part of the DNA-PK complex, involved in the early steps of ribosome assembly by promoting the processing of precursor rRNA into mature 18S rRNA in the small-subunit processome. Recognizes the substrate consensus sequence [ST]-Q. Phosphorylates 'Ser-139' of histone variant H2AX, thereby regulating DNA damage response mechanism. This chain is DNA-dependent protein kinase catalytic subunit (prkdc), found in Xenopus laevis (African clawed frog).